The chain runs to 380 residues: Large ribosomal subunit protein mL38 (380 aa).

The transit peptide at 1–26 directs the protein to the mitochondrion; it reads MAAPWWRAALCECRRWRGFSTSAVLG. Residues 99 to 127 are a coiled coil; it reads RTQQLLERKQAIQELRANVEEERAARLRT.

Belongs to the phosphatidylethanolamine-binding protein family. Mitochondrion-specific ribosomal protein mL38 subfamily. In terms of assembly, component of the mitochondrial large ribosomal subunit (mt-LSU). Mature mammalian 55S mitochondrial ribosomes consist of a small (28S) and a large (39S) subunit. The 28S small subunit contains a 12S ribosomal RNA (12S mt-rRNA) and 30 different proteins. The 39S large subunit contains a 16S rRNA (16S mt-rRNA), a copy of mitochondrial valine transfer RNA (mt-tRNA(Val)), which plays an integral structural role, and 52 different proteins. mL38 is located at the central protuberance.

The protein resides in the mitochondrion. This chain is Large ribosomal subunit protein mL38 (MRPL38), found in Homo sapiens (Human).